Consider the following 315-residue polypeptide: DNA-directed RNA polymerase subunit alpha (315 aa).

Positions methionine 1–threonine 228 are alpha N-terminal domain (alpha-NTD). Residues lysine 245 to glutamate 315 form an alpha C-terminal domain (alpha-CTD) region.

The protein belongs to the RNA polymerase alpha chain family. As to quaternary structure, homodimer. The RNAP catalytic core consists of 2 alpha, 1 beta, 1 beta' and 1 omega subunit. When a sigma factor is associated with the core the holoenzyme is formed, which can initiate transcription.

It catalyses the reaction RNA(n) + a ribonucleoside 5'-triphosphate = RNA(n+1) + diphosphate. Functionally, DNA-dependent RNA polymerase catalyzes the transcription of DNA into RNA using the four ribonucleoside triphosphates as substrates. The sequence is that of DNA-directed RNA polymerase subunit alpha from Clostridium tetani (strain Massachusetts / E88).